We begin with the raw amino-acid sequence, 149 residues long: Protein cornichon homolog 2 (149 aa).

The next 3 membrane-spanning stretches (helical) occupy residues 3 to 23, 59 to 79, and 117 to 137; these read IELILWLFSFASIMVLIGLTA, ALCASFLLTLHWFPFLVMAPV, and YFSLFIITIYRLVMTAVTLFI.

This sequence belongs to the cornichon family.

It localises to the endoplasmic reticulum membrane. The protein resides in the golgi apparatus membrane. Its function is as follows. Acts as a cargo receptor necessary for the transportation of secretory proteins from the endoplasmic reticulum (ER) in COPII-coated vesicles targeted to the Golgi apparatus. This chain is Protein cornichon homolog 2, found in Oryza sativa subsp. japonica (Rice).